The chain runs to 66 residues: LYR motif-containing protein PHYPADRAFT_186863 (66 aa).

Belongs to the complex I LYR family. LYRM9 subfamily.

This is LYR motif-containing protein PHYPADRAFT_186863 from Physcomitrium patens (Spreading-leaved earth moss).